The following is a 122-amino-acid chain: Large ribosomal subunit protein uL14 (122 aa).

Belongs to the universal ribosomal protein uL14 family. Part of the 50S ribosomal subunit. Forms a cluster with proteins L3 and L19. In the 70S ribosome, L14 and L19 interact and together make contacts with the 16S rRNA in bridges B5 and B8.

Its function is as follows. Binds to 23S rRNA. Forms part of two intersubunit bridges in the 70S ribosome. This is Large ribosomal subunit protein uL14 from Mycoplasmopsis agalactiae (strain NCTC 10123 / CIP 59.7 / PG2) (Mycoplasma agalactiae).